The following is a 515-amino-acid chain: Maturase K (515 aa).

It belongs to the intron maturase 2 family. MatK subfamily.

It localises to the plastid. The protein localises to the chloroplast. In terms of biological role, usually encoded in the trnK tRNA gene intron. Probably assists in splicing its own and other chloroplast group II introns. The chain is Maturase K from Pinus koraiensis (Korean pine).